Here is a 566-residue protein sequence, read N- to C-terminus: Potassium-transporting ATPase potassium-binding subunit (566 aa).

12 helical membrane passes run 6–26 (VALL…LGIA), 60–80 (AAAI…LMLF), 128–148 (LGLT…AFVL), 167–187 (IWRI…LFLA), 247–267 (LTNF…CICF), 276–296 (VGSA…LLIM), 331–351 (FGLW…CGAV), 361–381 (LGGL…GGVG), 383–403 (GWYG…LMIG), 423–443 (IGLL…VILP), 492–512 (LMFV…GALI), and 530–550 (LFVG…FIPA).

This sequence belongs to the KdpA family. In terms of assembly, the system is composed of three essential subunits: KdpA, KdpB and KdpC.

It localises to the cell inner membrane. Its function is as follows. Part of the high-affinity ATP-driven potassium transport (or Kdp) system, which catalyzes the hydrolysis of ATP coupled with the electrogenic transport of potassium into the cytoplasm. This subunit binds the periplasmic potassium ions and delivers the ions to the membrane domain of KdpB through an intramembrane tunnel. The chain is Potassium-transporting ATPase potassium-binding subunit from Tolumonas auensis (strain DSM 9187 / NBRC 110442 / TA 4).